A 199-amino-acid chain; its full sequence is Recombination protein RecR (199 aa).

A C4-type zinc finger spans residues cysteine 60 to cysteine 75. In terms of domain architecture, Toprim spans serine 83–proline 178.

Belongs to the RecR family.

Its function is as follows. May play a role in DNA repair. It seems to be involved in an RecBC-independent recombinational process of DNA repair. It may act with RecF and RecO. This chain is Recombination protein RecR, found in Paracidovorax citrulli (strain AAC00-1) (Acidovorax citrulli).